Consider the following 121-residue polypeptide: Small ribosomal subunit protein uS13 (121 aa).

Residues 96 to 121 (PVRGQNTKNNARTRKGKAVAIAGKKK) are disordered. Basic residues predominate over residues 106–121 (ARTRKGKAVAIAGKKK).

The protein belongs to the universal ribosomal protein uS13 family. Part of the 30S ribosomal subunit. Forms a loose heterodimer with protein S19. Forms two bridges to the 50S subunit in the 70S ribosome.

Its function is as follows. Located at the top of the head of the 30S subunit, it contacts several helices of the 16S rRNA. In the 70S ribosome it contacts the 23S rRNA (bridge B1a) and protein L5 of the 50S subunit (bridge B1b), connecting the 2 subunits; these bridges are implicated in subunit movement. Contacts the tRNAs in the A and P-sites. In Streptococcus agalactiae serotype Ia (strain ATCC 27591 / A909 / CDC SS700), this protein is Small ribosomal subunit protein uS13.